We begin with the raw amino-acid sequence, 408 residues long: tRNA(Ile)-lysidine synthase (408 aa).

27–32 serves as a coordination point for ATP; the sequence is SGGGDS.

Belongs to the tRNA(Ile)-lysidine synthase family.

The protein localises to the cytoplasm. The catalysed reaction is cytidine(34) in tRNA(Ile2) + L-lysine + ATP = lysidine(34) in tRNA(Ile2) + AMP + diphosphate + H(+). In terms of biological role, ligates lysine onto the cytidine present at position 34 of the AUA codon-specific tRNA(Ile) that contains the anticodon CAU, in an ATP-dependent manner. Cytidine is converted to lysidine, thus changing the amino acid specificity of the tRNA from methionine to isoleucine. The protein is tRNA(Ile)-lysidine synthase of Caulobacter vibrioides (strain ATCC 19089 / CIP 103742 / CB 15) (Caulobacter crescentus).